Consider the following 69-residue polypeptide: Ribosome modulation factor (69 aa).

Belongs to the ribosome modulation factor family.

The protein localises to the cytoplasm. Its function is as follows. During stationary phase, converts 70S ribosomes to an inactive dimeric form (100S ribosomes). The sequence is that of Ribosome modulation factor from Marinomonas mediterranea (strain ATCC 700492 / JCM 21426 / NBRC 103028 / MMB-1).